A 144-amino-acid chain; its full sequence is Cytochrome c-type biogenesis protein CcmE (144 aa).

The Cytoplasmic segment spans residues 1 to 7 (MTRKQKR). A helical; Signal-anchor for type II membrane protein transmembrane segment spans residues 8-28 (LAVIGSGMGFLALAAALTFYA). Residues 29-144 (LGQQTSYFYM…LKKDGLWQEQ (116 aa)) lie on the Periplasmic side of the membrane. Residues histidine 122 and tyrosine 126 each contribute to the heme site.

This sequence belongs to the CcmE/CycJ family.

Its subcellular location is the cell inner membrane. Functionally, heme chaperone required for the biogenesis of c-type cytochromes. Transiently binds heme delivered by CcmC and transfers the heme to apo-cytochromes in a process facilitated by CcmF and CcmH. This is Cytochrome c-type biogenesis protein CcmE from Chelativorans sp. (strain BNC1).